Reading from the N-terminus, the 127-residue chain is Small ribosomal subunit protein uS12 (127 aa).

Residue Asp-89 is modified to 3-methylthioaspartic acid. A disordered region spans residues 101-127; the sequence is ALDTSGVAGRTQRRSKYGAKRPKEAKK. The span at 111–127 shows a compositional bias: basic residues; it reads TQRRSKYGAKRPKEAKK.

It belongs to the universal ribosomal protein uS12 family. Part of the 30S ribosomal subunit. Contacts proteins S8 and S17. May interact with IF1 in the 30S initiation complex.

In terms of biological role, with S4 and S5 plays an important role in translational accuracy. Functionally, interacts with and stabilizes bases of the 16S rRNA that are involved in tRNA selection in the A site and with the mRNA backbone. Located at the interface of the 30S and 50S subunits, it traverses the body of the 30S subunit contacting proteins on the other side and probably holding the rRNA structure together. The combined cluster of proteins S8, S12 and S17 appears to hold together the shoulder and platform of the 30S subunit. The polypeptide is Small ribosomal subunit protein uS12 (Flavobacterium psychrophilum (strain ATCC 49511 / DSM 21280 / CIP 103535 / JIP02/86)).